The primary structure comprises 491 residues: UDP-N-acetylmuramate--L-alanine ligase (491 aa).

126-132 (GTHGKTT) provides a ligand contact to ATP.

Belongs to the MurCDEF family.

It is found in the cytoplasm. It catalyses the reaction UDP-N-acetyl-alpha-D-muramate + L-alanine + ATP = UDP-N-acetyl-alpha-D-muramoyl-L-alanine + ADP + phosphate + H(+). It functions in the pathway cell wall biogenesis; peptidoglycan biosynthesis. Cell wall formation. The protein is UDP-N-acetylmuramate--L-alanine ligase of Escherichia coli (strain SE11).